A 288-amino-acid chain; its full sequence is ATP synthase gamma chain (288 aa).

Belongs to the ATPase gamma chain family. In terms of assembly, F-type ATPases have 2 components, CF(1) - the catalytic core - and CF(0) - the membrane proton channel. CF(1) has five subunits: alpha(3), beta(3), gamma(1), delta(1), epsilon(1). CF(0) has three main subunits: a, b and c.

The protein resides in the cell inner membrane. Its function is as follows. Produces ATP from ADP in the presence of a proton gradient across the membrane. The gamma chain is believed to be important in regulating ATPase activity and the flow of protons through the CF(0) complex. The protein is ATP synthase gamma chain of Polaromonas naphthalenivorans (strain CJ2).